Reading from the N-terminus, the 112-residue chain is Large ribosomal subunit protein eL36y (112 aa).

Positions 79-88 (KLGTHKRAKR) are enriched in basic residues. Positions 79 to 112 (KLGTHKRAKRKREEMSSVLRKMRSGGGGATEKKK) are disordered. Residues 102–112 (SGGGGATEKKK) show a composition bias toward gly residues.

The protein belongs to the eukaryotic ribosomal protein eL36 family.

This chain is Large ribosomal subunit protein eL36y (RPL36B), found in Arabidopsis thaliana (Mouse-ear cress).